The primary structure comprises 35 residues: Small toxic polypeptide LdrD (35 aa).

A helical membrane pass occupies residues 10 to 32; it reads FWHDLAAPVIAGILASMIVNWLN.

It belongs to the Ldr toxic peptide family.

The protein localises to the cell inner membrane. Functionally, toxic component of a type I toxin-antitoxin (TA) system. Overexpression causes rapid cell killing and nucleoid condensation of the host cell. Overexpression induces stress-response and a number of membrane protein genes. May inhibit ATP synthesis due to its insertion in the cell inner membrane. This Escherichia coli (strain K12) protein is Small toxic polypeptide LdrD (ldrD).